We begin with the raw amino-acid sequence, 374 residues long: Ribosomal RNA large subunit methyltransferase G (374 aa).

The protein belongs to the methyltransferase superfamily. RlmG family.

The protein resides in the cytoplasm. The enzyme catalyses guanosine(1835) in 23S rRNA + S-adenosyl-L-methionine = N(2)-methylguanosine(1835) in 23S rRNA + S-adenosyl-L-homocysteine + H(+). Its function is as follows. Specifically methylates the guanine in position 1835 (m2G1835) of 23S rRNA. The polypeptide is Ribosomal RNA large subunit methyltransferase G (Pseudomonas aeruginosa (strain ATCC 15692 / DSM 22644 / CIP 104116 / JCM 14847 / LMG 12228 / 1C / PRS 101 / PAO1)).